Here is a 244-residue protein sequence, read N- to C-terminus: DnaJ homolog subfamily C member 4 (244 aa).

Residues 37 to 102 enclose the J domain; that stretch reads NYYELLGVHP…ESRRNYDHQL (66 aa). Residues 96–127 are disordered; it reads RNYDHQLHSASPPKSSGSTAEPKYTQQTHSSW. Polar residues predominate over residues 103–127; sequence HSASPPKSSGSTAEPKYTQQTHSSW. Residues 159–178 form a helical membrane-spanning segment; that stretch reads VLGYCLLLMVAGMGLHYVAF. Residues 208-244 are disordered; that stretch reads RANRARIQQERQQRQQPRAEPSLPPESSRIMPQDTSP.

It localises to the membrane. This chain is DnaJ homolog subfamily C member 4 (Dnajc4), found in Mus musculus (Mouse).